The primary structure comprises 436 residues: Zinc finger protein 101 (436 aa).

One can recognise a KRAB domain in the interval Val4–Thr82. The C2H2-type 1 zinc finger occupies Cys102–His124. Positions Lys128–Arg141 are enriched in basic and acidic residues. Residues Lys128–Thr164 are disordered. Polar residues predominate over residues Ile151–Pro163. Residues Tyr169–His191 form a C2H2-type 2 zinc finger. The C2H2-type 3; degenerate zinc-finger motif lies at Tyr197 to His219. 7 consecutive C2H2-type zinc fingers follow at residues Tyr225 to His247, Tyr253 to His276, His282 to His304, Tyr310 to His332, Tyr338 to His360, Tyr366 to His388, and Phe394 to His416.

This sequence belongs to the krueppel C2H2-type zinc-finger protein family. Expressed in a variety of adult and fetal tissues.

It localises to the nucleus. May be involved in transcriptional regulation. The sequence is that of Zinc finger protein 101 (ZNF101) from Homo sapiens (Human).